We begin with the raw amino-acid sequence, 233 residues long: Large ribosomal subunit protein uL1 (233 aa).

The protein belongs to the universal ribosomal protein uL1 family. Part of the 50S ribosomal subunit.

Functionally, binds directly to 23S rRNA. The L1 stalk is quite mobile in the ribosome, and is involved in E site tRNA release. Its function is as follows. Protein L1 is also a translational repressor protein, it controls the translation of the L11 operon by binding to its mRNA. In Polynucleobacter asymbioticus (strain DSM 18221 / CIP 109841 / QLW-P1DMWA-1) (Polynucleobacter necessarius subsp. asymbioticus), this protein is Large ribosomal subunit protein uL1.